A 353-amino-acid polypeptide reads, in one-letter code: UPF0283 membrane protein YcjF (353 aa).

The span at 1–19 shows a compositional bias: basic and acidic residues; the sequence is MSEPLKPRIDFAEPLKEEP. The tract at residues 1-35 is disordered; that stretch reads MSEPLKPRIDFAEPLKEEPTSAFKAQQTFSEAESR. Transmembrane regions (helical) follow at residues 70–90, 100–120, and 213–233; these read MVMG…VQWT, VALG…GSVV, and ESTL…FIAW.

The protein belongs to the UPF0283 family.

Its subcellular location is the cell inner membrane. In Salmonella paratyphi C (strain RKS4594), this protein is UPF0283 membrane protein YcjF.